A 494-amino-acid chain; its full sequence is 4-trimethylaminobutyraldehyde dehydrogenase (494 aa).

Residue Ser-2 is modified to N-acetylserine; in 4-trimethylaminobutyraldehyde dehydrogenase, N-terminally processed. N6-acetyllysine; alternate is present on Lys-30. Residue Lys-30 is modified to N6-succinyllysine; alternate. An N6-succinyllysine modification is found at Lys-59. NAD(+) is bound by residues Lys-180 and Gly-232 to Thr-236. The active-site Proton acceptor is the Glu-254. Cys-288 functions as the Nucleophile in the catalytic mechanism. Residue Lys-298 is modified to N6-acetyllysine. At Lys-303 the chain carries N6-acetyllysine; alternate. Residue Lys-303 is modified to N6-succinyllysine; alternate. Lys-344 is modified (N6-acetyllysine). Residue Glu-391 coordinates NAD(+).

This sequence belongs to the aldehyde dehydrogenase family. As to quaternary structure, homotetramer. As to expression, detected in brain (at protein level). High expression in adult liver, skeletal muscle, and kidney. Low levels in heart, pancreas, lung and brain. Expressed in all regions of the brain. Expression levels are variable in the different brain areas, with the highest levels in the spinal cord and the lowest in the occipital pole.

It is found in the cytoplasm. The protein localises to the cytosol. The enzyme catalyses 4-(trimethylamino)butanal + NAD(+) + H2O = 4-(trimethylamino)butanoate + NADH + 2 H(+). It carries out the reaction an aldehyde + NAD(+) + H2O = a carboxylate + NADH + 2 H(+). It catalyses the reaction 4-aminobutanal + NAD(+) + H2O = 4-aminobutanoate + NADH + 2 H(+). The catalysed reaction is formaldehyde + NAD(+) + H2O = formate + NADH + 2 H(+). The enzyme catalyses acetaldehyde + NAD(+) + H2O = acetate + NADH + 2 H(+). It carries out the reaction imidazole-4-acetaldehyde + NAD(+) + H2O = imidazole-4-acetate + NADH + 2 H(+). It catalyses the reaction acrolein + NAD(+) + H2O = acrylate + NADH + 2 H(+). The catalysed reaction is (5-hydroxyindol-3-yl)acetaldehyde + NAD(+) + H2O = (5-hydroxyindol-3-yl)acetate + NADH + 2 H(+). The enzyme catalyses 3,4-dihydroxyphenylacetaldehyde + NAD(+) + H2O = 3,4-dihydroxyphenylacetate + NADH + 2 H(+). It carries out the reaction spermine monoaldehyde + NAD(+) + H2O = N-(2-carboxyethyl)spermidine + NADH + 2 H(+). It catalyses the reaction propanal + NAD(+) + H2O = propanoate + NADH + 2 H(+). The catalysed reaction is butanal + NAD(+) + H2O = butanoate + NADH + 2 H(+). The enzyme catalyses pentanal + NAD(+) + H2O = pentanoate + NADH + 2 H(+). It carries out the reaction hexanal + NAD(+) + H2O = hexanoate + NADH + 2 H(+). It functions in the pathway amine and polyamine biosynthesis; carnitine biosynthesis. In terms of biological role, converts gamma-trimethylaminobutyraldehyde into gamma-butyrobetaine with high efficiency (in vitro). Can catalyze the irreversible oxidation of a broad range of aldehydes to the corresponding acids in an NAD-dependent reaction, but with low efficiency. Catalyzes the oxidation of aldehydes arising from biogenic amines and polyamines. In Homo sapiens (Human), this protein is 4-trimethylaminobutyraldehyde dehydrogenase (ALDH9A1).